Consider the following 566-residue polypeptide: Sulfite reductase [NADPH] hemoprotein beta-component (566 aa).

Residues Cys430, Cys436, Cys475, and Cys479 each coordinate [4Fe-4S] cluster. Residue Cys479 participates in siroheme binding.

Belongs to the nitrite and sulfite reductase 4Fe-4S domain family. In terms of assembly, alpha(8)-beta(8). The alpha component is a flavoprotein, the beta component is a hemoprotein. Siroheme is required as a cofactor. Requires [4Fe-4S] cluster as cofactor.

The enzyme catalyses hydrogen sulfide + 3 NADP(+) + 3 H2O = sulfite + 3 NADPH + 4 H(+). Its pathway is sulfur metabolism; hydrogen sulfide biosynthesis; hydrogen sulfide from sulfite (NADPH route): step 1/1. Component of the sulfite reductase complex that catalyzes the 6-electron reduction of sulfite to sulfide. This is one of several activities required for the biosynthesis of L-cysteine from sulfate. The sequence is that of Sulfite reductase [NADPH] hemoprotein beta-component from Baumannia cicadellinicola subsp. Homalodisca coagulata.